A 193-amino-acid chain; its full sequence is 7-methyl-GTP pyrophosphatase (193 aa).

Asp-68 serves as the catalytic Proton acceptor.

It belongs to the Maf family. YceF subfamily. A divalent metal cation serves as cofactor.

It localises to the cytoplasm. It carries out the reaction N(7)-methyl-GTP + H2O = N(7)-methyl-GMP + diphosphate + H(+). Nucleoside triphosphate pyrophosphatase that hydrolyzes 7-methyl-GTP (m(7)GTP). May have a dual role in cell division arrest and in preventing the incorporation of modified nucleotides into cellular nucleic acids. The chain is 7-methyl-GTP pyrophosphatase from Chromobacterium violaceum (strain ATCC 12472 / DSM 30191 / JCM 1249 / CCUG 213 / NBRC 12614 / NCIMB 9131 / NCTC 9757 / MK).